We begin with the raw amino-acid sequence, 147 residues long: Myoglobin (147 aa).

The 140-residue stretch at 2 to 141 (ADHDLVLKCW…VIGDIDGYYK (140 aa)) folds into the Globin domain. H60 contacts nitrite. Residue H60 coordinates O2. H89 contacts heme b.

It belongs to the globin family. In terms of assembly, monomeric.

The protein resides in the cytoplasm. It is found in the sarcoplasm. The enzyme catalyses Fe(III)-heme b-[protein] + nitric oxide + H2O = Fe(II)-heme b-[protein] + nitrite + 2 H(+). It carries out the reaction H2O2 + AH2 = A + 2 H2O. Its function is as follows. Monomeric heme protein which primary function is to store oxygen and facilitate its diffusion within muscle tissues. Reversibly binds oxygen through a pentacoordinated heme iron and enables its timely and efficient release as needed during periods of heightened demand. Depending on the oxidative conditions of tissues and cells, and in addition to its ability to bind oxygen, it also has a nitrite reductase activity whereby it regulates the production of bioactive nitric oxide. Under stress conditions, like hypoxia and anoxia, it also protects cells against reactive oxygen species thanks to its pseudoperoxidase activity. The sequence is that of Myoglobin (mb) from Danio rerio (Zebrafish).